Reading from the N-terminus, the 931-residue chain is Probable UDP-N-acetylglucosamine--peptide N-acetylglucosaminyltransferase SPINDLY (931 aa).

The segment covering 1–15 has biased composition (basic and acidic residues); sequence MAWTEKDVENGKESE. Residues 1 to 38 form a disordered region; that stretch reads MAWTEKDVENGKESESLGNNGFLKGGQSSSGSKGSPGR. A compositionally biased stretch (low complexity) spans 25–37; that stretch reads GGQSSSGSKGSPG. TPR repeat units lie at residues 48 to 81, 82 to 115, 116 to 149, 157 to 190, 191 to 224, 225 to 258, 266 to 299, 300 to 333, 334 to 367, 369 to 401, and 402 to 435; these read DKDAITYANILRSRNKFVDALAIYESVLEKDSKS, IESLIGKGICLQMQNTGRLAFESFSEAIKVDPQN, ACALTHCGILYKDEGRLVEAAESYEKALKADPSY, AIVLTDIGTSLKLAGNTQEGIQKYYEAIKIDSHY, APAYYNLGVVYSEMMQYDMALNCYEKAALERPMY, AEAYCNMGVIFKNRGDLESAIACYERCLAVSPNF, AIALTDLGTKVKLEGDINQGVAYYKKALCYNWHY, ADAMYNLGVAYGEMLKFDMAIVFYELAFHFNPHC, AEACNNLGVIYKDRDNLDKAVECYQLALSIKPNF, QSLNNLGVVYTVQGKMDAAASMIEKAIIANPTY, and AEAYNNLGVLYRDAGNISLAIEAYEQCLKIDPDS. Positions 436 to 931 are catalytic region; that stretch reads RNAGQNRLLA…NHNGNHGNLS (496 aa). Residues 864–884 are compositionally biased toward low complexity; it reads QQQQTQTESVVPEESSVNPSE. A disordered region spans residues 864-931; sequence QQQQTQTESV…NHNGNHGNLS (68 aa). Residues 910 to 931 show a composition bias toward polar residues; the sequence is KSSTSEENGVQSNHNGNHGNLS.

Belongs to the glycosyltransferase 41 family. O-GlcNAc transferase subfamily.

Its subcellular location is the nucleus. The enzyme catalyses L-seryl-[protein] + UDP-N-acetyl-alpha-D-glucosamine = 3-O-(N-acetyl-beta-D-glucosaminyl)-L-seryl-[protein] + UDP + H(+). It catalyses the reaction L-threonyl-[protein] + UDP-N-acetyl-alpha-D-glucosamine = 3-O-(N-acetyl-beta-D-glucosaminyl)-L-threonyl-[protein] + UDP + H(+). It participates in protein modification; protein glycosylation. Functionally, probable O-linked N-acetylglucosamine transferase (OGT) involved in various processes such as gibberellin (GA) signaling pathway. OGTs catalyze the addition of nucleotide-activated sugars directly onto the polypeptide through O-glycosidic linkage with the hydroxyl of serine or threonine. Probably acts by adding O-linked sugars to yet unknown proteins. This is Probable UDP-N-acetylglucosamine--peptide N-acetylglucosaminyltransferase SPINDLY (SPY) from Solanum lycopersicum (Tomato).